The chain runs to 115 residues: Replication initiation control protein YabA (115 aa).

4 residues coordinate Zn(2+): H90, C92, C106, and C109.

This sequence belongs to the YabA family. As to quaternary structure, homotetramer. Interacts with both DnaA and DnaN, acting as a bridge between these two proteins. It depends on Zn(2+) as a cofactor.

It is found in the cytoplasm. The protein localises to the nucleoid. Its function is as follows. Involved in control of chromosome replication initiation. Inhibits the cooperative binding of DnaA to the oriC region, thus negatively regulating initiation of chromosome replication. Inhibits the ability of DnaA-ATP to form a helix on DNA; does not disassemble preformed DnaA-DNA helices. Decreases the residence time of DnaA on the chromosome at its binding sites (oriC, replication forks and promoter-binding sites). Tethers DnaA to the replication machinery via the DNA polymerase beta sliding clamp subunit (dnaN). Associates with oriC and other DnaA targets on the chromosome in a DnaA-dependent manner. The protein is Replication initiation control protein YabA of Staphylococcus aureus (strain bovine RF122 / ET3-1).